The primary structure comprises 538 residues: Calcyphosin-2 (538 aa).

The segment covering 134 to 146 (RNAENTKSNVTHK) has biased composition (polar residues). Positions 134-154 (RNAENTKSNVTHKQSPRNKID) are disordered. EF-hand domains are found at residues 426–461 (RILT…FHLE), 462–497 (VSEK…EMNE), and 498–533 (YRKS…KKHS). Ca(2+)-binding residues include aspartate 439, asparagine 443, aspartate 450, asparagine 477, asparagine 479, lysine 481, glutamate 486, aspartate 511, asparagine 513, serine 515, serine 517, and asparagine 522.

In terms of tissue distribution, abundantly expressed in many tissues. Expressed in brain, colon, heart, kidney, liver, lung, liver, pancreas, placenta, skeletal muscle, testis and thymus. Highest expression in colon, testis, lung, placenta and brain.

This is Calcyphosin-2 from Homo sapiens (Human).